Here is a 727-residue protein sequence, read N- to C-terminus: Probable glutamate carboxypeptidase ARB_02390 (727 aa).

Positions Met1–Gly18 are cleaved as a signal peptide. N-linked (GlcNAc...) asparagine glycans are attached at residues Asn60 and Asn80. A PA domain is found at Ala158–Leu296. Arg197 is a binding site for substrate. Asn223 carries N-linked (GlcNAc...) asparagine glycosylation. The tract at residues Phe255–Val279 is disordered. Thr261 and Tyr264 together coordinate Ca(2+). The interval Ser266–Leu565 is NAALADase. 3 N-linked (GlcNAc...) asparagine glycosylation sites follow: Asn310, Asn319, and Asn353. His366 serves as a coordination point for Zn(2+). Glu414 functions as the For NAALADase activity in the catalytic mechanism. Zn(2+) is bound at residue Glu415. Ca(2+) contacts are provided by Glu423 and Glu426. Residue Asp443 coordinates Zn(2+). Substrate-binding positions include Thr516 to Ala518 and Tyr530. His531 contributes to the Zn(2+) binding site. The Charge relay system role is filled by Ser604. Asn614 is a glycosylation site (N-linked (GlcNAc...) asparagine). The active-site Charge relay system is His665. Residue Gly675 to Tyr676 coordinates substrate. The N-linked (GlcNAc...) asparagine glycan is linked to Asn692.

It belongs to the peptidase M28 family. M28B subfamily. It depends on Zn(2+) as a cofactor.

The protein resides in the secreted. The enzyme catalyses Release of an unsubstituted, C-terminal glutamyl residue, typically from Ac-Asp-Glu or folylpoly-gamma-glutamates.. Functionally, has both folate hydrolase and N-acetylated-alpha-linked-acidic dipeptidase (NAALADase) activity. Also exhibits a dipeptidyl-peptidase IV type activity. The protein is Probable glutamate carboxypeptidase ARB_02390 of Arthroderma benhamiae (strain ATCC MYA-4681 / CBS 112371) (Trichophyton mentagrophytes).